A 612-amino-acid chain; its full sequence is Dihydroxy-acid dehydratase (612 aa).

Residue Asp-81 coordinates Mg(2+). A [2Fe-2S] cluster-binding site is contributed by Cys-122. Asp-123 and Lys-124 together coordinate Mg(2+). Position 124 is an N6-carboxylysine (Lys-124). [2Fe-2S] cluster is bound at residue Cys-193. A Mg(2+)-binding site is contributed by Glu-489. The Proton acceptor role is filled by Ser-515.

This sequence belongs to the IlvD/Edd family. As to quaternary structure, homodimer. The cofactor is [2Fe-2S] cluster. It depends on Mg(2+) as a cofactor.

The catalysed reaction is (2R)-2,3-dihydroxy-3-methylbutanoate = 3-methyl-2-oxobutanoate + H2O. It carries out the reaction (2R,3R)-2,3-dihydroxy-3-methylpentanoate = (S)-3-methyl-2-oxopentanoate + H2O. It participates in amino-acid biosynthesis; L-isoleucine biosynthesis; L-isoleucine from 2-oxobutanoate: step 3/4. The protein operates within amino-acid biosynthesis; L-valine biosynthesis; L-valine from pyruvate: step 3/4. Functions in the biosynthesis of branched-chain amino acids. Catalyzes the dehydration of (2R,3R)-2,3-dihydroxy-3-methylpentanoate (2,3-dihydroxy-3-methylvalerate) into 2-oxo-3-methylpentanoate (2-oxo-3-methylvalerate) and of (2R)-2,3-dihydroxy-3-methylbutanoate (2,3-dihydroxyisovalerate) into 2-oxo-3-methylbutanoate (2-oxoisovalerate), the penultimate precursor to L-isoleucine and L-valine, respectively. In Ectopseudomonas mendocina (strain ymp) (Pseudomonas mendocina), this protein is Dihydroxy-acid dehydratase.